The sequence spans 918 residues: Interleukin-6 receptor subunit beta (918 aa).

The N-terminal stretch at 1–22 (MSALRIWLMQALLIFLTTESIG) is a signal peptide. Over 23–618 (QLVEPCGYIY…TLKFAQGEIE (596 aa)) the chain is Extracellular. An Ig-like C2-type domain is found at 26–120 (EPCGYIYPEF…IEQNVYGITI (95 aa)). Cystine bridges form between Cys28–Cys54 and Cys48–Cys103. N-linked (GlcNAc...) asparagine glycosylation is found at Asn43, Asn61, Asn83, and Asn131. Fibronectin type-III domains lie at 125-215 (PPDI…NFDP), 223-323 (PPHN…TYED), 328-418 (APSF…IPGS), 422-516 (ASHP…LKQA), and 518-612 (PSKG…TLKF). Cys134 and Cys144 form a disulfide bridge. N-linked (GlcNAc...) asparagine glycosylation is present at Asn157. Residues Cys172 and Cys181 are joined by a disulfide bond. N-linked (GlcNAc...) asparagine glycans are attached at residues Asn205 and Asn226. A WSXWS motif motif is present at residues 309–313 (WSDWS). Asn382 and Asn389 each carry an N-linked (GlcNAc...) asparagine glycan. Cys457 and Cys465 are disulfide-bonded. N-linked (GlcNAc...) asparagine glycans are attached at residues Asn477 and Asn552. The helical transmembrane segment at 619 to 640 (AIVVPVCLAFLLTTLLGVLFCF) threads the bilayer. The Cytoplasmic portion of the chain corresponds to 641 to 918 (NKRDLIKKHI…TVRQGGYMPQ (278 aa)). The Box 1 motif signature appears at 650–658 (IWPNVPDPS). Disordered stretches follow at residues 659 to 679 (KSHI…NSKD), 720 to 754 (TEGH…STAS), 773 to 795 (VQVF…PEDL), and 817 to 842 (SCSQ…GSEE). Residues Ser660 and Ser666 each carry the phosphoserine modification. Over residues 730 to 751 (SSCMSSSRPSISSSEENESAQS) the composition is skewed to low complexity. Positions 773–785 (VQVFSRSESTQPL) are enriched in polar residues. 4 positions are modified to phosphoserine: Ser781, Ser788, Ser828, and Ser838.

This sequence belongs to the type I cytokine receptor family. Type 2 subfamily. As to quaternary structure, component of a hexamer of two molecules each of IL6, IL6R and IL6ST; associates with the complex IL6:IL6R but does not interact with IL6. Forms heterodimers composed of LIFR and IL6ST (type I OSM receptor) which are activated by LIF and OSM. Also forms heterodimers composed of OSMR and IL6ST (type II receptor) which are activated by OSM but not by LIF. Interacts with HCK. Interacts with INPP5D/SHIP1. Interacts with SRC and YES. Interacts with ARMH4; this interaction prevents IL6ST protein homodimerization and bridges ARMH4 with IL6R and STAT3 and therefore inhibits phosphorylation of STAT3 at 'Tyr-705'. Phosphorylation of Ser-781 down-regulates cell surface expression. Post-translationally, heavily N-glycosylated. Glycosylation is required for protein stability and localization in plasma membrane but not for ligand binding. In terms of tissue distribution, found in hepatocytes, astrocytes, fibroblasts and endothelial cells.

Its subcellular location is the cell membrane. In terms of biological role, signal-transducing molecule. The receptor systems for IL6, LIF, OSM, CNTF, IL11, CTF1 and BSF3 can utilize IL6ST for initiating signal transmission. Binding of IL6 to IL6R induces IL6ST homodimerization and formation of a high-affinity receptor complex, which activates the intracellular JAK-MAPK and JAK-STAT3 signaling pathways. That causes phosphorylation of IL6ST tyrosine residues which in turn activates STAT3. In parallel, the IL6 signaling pathway induces the expression of two cytokine receptor signaling inhibitors, SOCS1 and SOCS3, which inhibit JAK and terminate the activity of the IL6 signaling pathway as a negative feedback loop. Also activates the yes-associated protein 1 (YAP) and NOTCH pathways to control inflammation-induced epithelial regeneration, independently of STAT3. Mediates signals which regulate immune response, hematopoiesis, pain control and bone metabolism. Has a role in embryonic development. Essential for survival of motor and sensory neurons and for differentiation of astrocytes. Required for expression of TRPA1 in nociceptive neurons. Required for the maintenance of PTH1R expression in the osteoblast lineage and for the stimulation of PTH-induced osteoblast differentiation. Required for normal trabecular bone mass and cortical bone composition. In Rattus norvegicus (Rat), this protein is Interleukin-6 receptor subunit beta.